We begin with the raw amino-acid sequence, 238 residues long: MVMGRIHSIESMGLVDGPGIRTVVFFQGCGLRCSYCHNPDTWNMAGGKELTAEELLKKLLRFKPYFDRSGGGVTFSGGEVLLQPEFLIDILKLCKEQGIHTAIDTAGYGYGNYEEILKHTDLVLLDIKHVDDDGYKCITGKGKRGFDDFLKAVENIGVKVWIRHVIVPTLTDSKENIRKLANIIKNIRNVEKVELLPYHTLGINKYEKLNLDYKLRDIEAMDKEKRKKLEKYLKELLE.

One can recognise a Radical SAM core domain in the interval 15–236; that stretch reads VDGPGIRTVV…KKLEKYLKEL (222 aa). The [4Fe-4S] cluster site is built by Cys-29, Cys-33, and Cys-36. S-adenosyl-L-methionine-binding positions include 35 to 37, Gly-78, 126 to 128, and His-199; these read YCH and DIK.

Belongs to the organic radical-activating enzymes family. [4Fe-4S] cluster is required as a cofactor.

It is found in the cytoplasm. It catalyses the reaction glycyl-[formate C-acetyltransferase] + reduced [flavodoxin] + S-adenosyl-L-methionine = glycin-2-yl radical-[formate C-acetyltransferase] + semiquinone [flavodoxin] + 5'-deoxyadenosine + L-methionine + H(+). In terms of biological role, activation of pyruvate formate-lyase under anaerobic conditions by generation of an organic free radical, using S-adenosylmethionine and reduced flavodoxin as cosubstrates to produce 5'-deoxy-adenosine. This is Pyruvate formate-lyase-activating enzyme (act) from Clostridium pasteurianum.